A 188-amino-acid chain; its full sequence is Putative CC-type chemokine FPV060 (188 aa).

It belongs to the intercrine beta (chemokine CC) family. Highly divergent.

The protein is Putative CC-type chemokine FPV060 of Fowlpox virus (strain NVSL) (FPV).